We begin with the raw amino-acid sequence, 127 residues long: Large ribosomal subunit protein bL12 (127 aa).

Residues 96-127 (GTPSTLKEAVSKDDAEEAAKQLKEAGAEVEVK) are disordered. Positions 104–127 (AVSKDDAEEAAKQLKEAGAEVEVK) are enriched in basic and acidic residues.

Belongs to the bacterial ribosomal protein bL12 family. Homodimer. Part of the ribosomal stalk of the 50S ribosomal subunit. Forms a multimeric L10(L12)X complex, where L10 forms an elongated spine to which 2 to 4 L12 dimers bind in a sequential fashion. Binds GTP-bound translation factors.

Its function is as follows. Forms part of the ribosomal stalk which helps the ribosome interact with GTP-bound translation factors. Is thus essential for accurate translation. The protein is Large ribosomal subunit protein bL12 of Oleidesulfovibrio alaskensis (strain ATCC BAA-1058 / DSM 17464 / G20) (Desulfovibrio alaskensis).